The chain runs to 81 residues: ATP synthase subunit c, chloroplastic (81 aa).

Transmembrane regions (helical) follow at residues 3–23 (PIIS…ASIG) and 57–77 (LAFM…LLFA).

Belongs to the ATPase C chain family. As to quaternary structure, F-type ATPases have 2 components, F(1) - the catalytic core - and F(0) - the membrane proton channel. F(1) has five subunits: alpha(3), beta(3), gamma(1), delta(1), epsilon(1). F(0) has four main subunits: a(1), b(1), b'(1) and c(10-14). The alpha and beta chains form an alternating ring which encloses part of the gamma chain. F(1) is attached to F(0) by a central stalk formed by the gamma and epsilon chains, while a peripheral stalk is formed by the delta, b and b' chains.

It is found in the plastid. The protein localises to the chloroplast thylakoid membrane. Functionally, f(1)F(0) ATP synthase produces ATP from ADP in the presence of a proton or sodium gradient. F-type ATPases consist of two structural domains, F(1) containing the extramembraneous catalytic core and F(0) containing the membrane proton channel, linked together by a central stalk and a peripheral stalk. During catalysis, ATP synthesis in the catalytic domain of F(1) is coupled via a rotary mechanism of the central stalk subunits to proton translocation. Its function is as follows. Key component of the F(0) channel; it plays a direct role in translocation across the membrane. A homomeric c-ring of between 10-14 subunits forms the central stalk rotor element with the F(1) delta and epsilon subunits. This is ATP synthase subunit c, chloroplastic from Phaseolus vulgaris (Kidney bean).